The sequence spans 360 residues: Uptake hydrogenase small subunit (360 aa).

Positions 1–43 form a signal peptide, tat-type signal; sequence MVETFYEVMRRQGISRRSFLKYCSLTATSLGLGPSFLPQIAHA. Residues Cys-60, Cys-63, Cys-158, Cys-192, His-230, Cys-233, Cys-258, and Cys-264 each contribute to the [4Fe-4S] cluster site. 3 residues coordinate [3Fe-4S] cluster: Cys-273, Cys-292, and Cys-295.

This sequence belongs to the [NiFe]/[NiFeSe] hydrogenase small subunit family. Heterodimer of a large and a small subunit. [4Fe-4S] cluster serves as cofactor. Requires [3Fe-4S] cluster as cofactor. In terms of processing, predicted to be exported by the Tat system. The position of the signal peptide cleavage has been experimentally proven.

Its subcellular location is the cell membrane. The catalysed reaction is H2 + A = AH2. Functionally, this enzyme recycles the H(2) produced by nitrogenase to increase the production of ATP and to protect nitrogenase against inhibition or damage by O(2) under carbon- or phosphate-limited conditions. The protein is Uptake hydrogenase small subunit (hoxK) of Cupriavidus necator (strain ATCC 17699 / DSM 428 / KCTC 22496 / NCIMB 10442 / H16 / Stanier 337) (Ralstonia eutropha).